A 117-amino-acid chain; its full sequence is Large ribosomal subunit protein bL20 (117 aa).

The protein belongs to the bacterial ribosomal protein bL20 family.

Functionally, binds directly to 23S ribosomal RNA and is necessary for the in vitro assembly process of the 50S ribosomal subunit. It is not involved in the protein synthesizing functions of that subunit. The polypeptide is Large ribosomal subunit protein bL20 (Natranaerobius thermophilus (strain ATCC BAA-1301 / DSM 18059 / JW/NM-WN-LF)).